A 2588-amino-acid chain; its full sequence is uncharacterized protein (2588 aa).

The segment covering 1-11 (MSFKNNEKYMD) has biased composition (basic and acidic residues). Disordered regions lie at residues 1-56 (MSFK…NISN), 442-598 (ELES…HFSN), 774-801 (KKEK…NNNI), 1303-1357 (DSHD…KKKY), 1631-1662 (QNSN…HHQN), 1685-1705 (NNNN…KDQP), 1820-1856 (KLNV…EEND), 2317-2342 (KKKK…DNIN), and 2415-2437 (YDNN…NSHT). Low complexity predominate over residues 42-56 (NNNNNNNNNNSNISN). A coiled-coil region spans residues 413–452 (YREIEENEKVMEMQRRENELLEEKKRLKQELESYHDDSST). Residues 451-462 (STDDDSSADEQQ) show a composition bias toward acidic residues. Basic and acidic residues-rich tracts occupy residues 463 to 515 (DERR…KNDD) and 522 to 588 (DHTH…DHTH). The span at 785–801 (DNNNNNNNNNNNDNNNI) shows a compositional bias: low complexity. A compositionally biased stretch (acidic residues) spans 1308-1318 (NNDDSVNDSND). Positions 1319-1331 (DTNNVNVNVNVND) are enriched in low complexity. The segment covering 1347-1356 (DKKKKHKKKK) has biased composition (basic residues). The segment covering 1631–1643 (QNSNNKSNDSLKM) has biased composition (polar residues). A compositionally biased stretch (low complexity) spans 1685-1698 (NNNNNNNNNNNNND). The segment covering 1828–1838 (QGERQDERNID) has biased composition (basic and acidic residues). The span at 1839-1856 (HEDEPVSSNTEDDHEEND) shows a compositional bias: acidic residues. Low complexity predominate over residues 2416 to 2434 (DNNNNNDNNNDNNNDNNNN).

This is an uncharacterized protein from Plasmodium falciparum (isolate 3D7).